The following is a 623-amino-acid chain: Chaperone protein DnaK (623 aa).

A Phosphothreonine; by autocatalysis modification is found at T197. The segment covering 595–615 (AENMYKKDEPNTANDKKKKDD) has biased composition (basic and acidic residues). Residues 595-623 (AENMYKKDEPNTANDKKKKDDDVIDAEVE) are disordered.

This sequence belongs to the heat shock protein 70 family.

In terms of biological role, acts as a chaperone. The polypeptide is Chaperone protein DnaK (Campylobacter jejuni subsp. jejuni serotype O:6 (strain 81116 / NCTC 11828)).